The following is a 597-amino-acid chain: Gigaxonin (597 aa).

Positions 30–99 constitute a BTB domain; sequence CDAHLVLDGE…IFSGQIRLNE (70 aa). The BACK domain occupies 134 to 236; it reads CIGIRDFALH…DSSYLREQML (103 aa). 6 Kelch repeats span residues 274–326, 327–374, 376–421, 422–468, 470–522, and 528–574; these read CIVT…SAEG, FLFV…EIDG, LYIL…AMKK, KIYA…GVAM, LYVF…VYGA, and SIYV…AALR.

Interacts with TBCB. Interacts with CUL3. Part of a complex that contains CUL3, RBX1 and GAN. Interacts (via BTB domain) with UBA1. Interacts (via Kelch domains) with MAP1B (via C-terminus) and MAP1S (via C-terminus). Post-translationally, ubiquitinated by E3 ubiquitin ligase complex formed by CUL3 and RBX1 and probably targeted for proteasome-independent degradation. As to expression, expressed in brain, heart and muscle.

It localises to the cytoplasm. The protein localises to the cytoskeleton. It functions in the pathway protein modification; protein ubiquitination. Functionally, probable cytoskeletal component that directly or indirectly plays an important role in neurofilament architecture. May act as a substrate-specific adapter of an E3 ubiquitin-protein ligase complex which mediates the ubiquitination and subsequent proteasomal degradation of target proteins. Controls degradation of TBCB. Controls degradation of MAP1B and MAP1S, and is critical for neuronal maintenance and survival. The sequence is that of Gigaxonin (GAN) from Homo sapiens (Human).